A 1029-amino-acid polypeptide reads, in one-letter code: U2 snRNP-associated SURP motif-containing protein (1029 aa).

2 disordered regions span residues 1–111 (MADK…EDEK) and 141–274 (VNAA…PSTT). At Ala2 the chain carries N-acetylalanine. The span at 7-16 (GGSQKASSKT) shows a compositional bias: polar residues. Basic residues predominate over residues 45–54 (TRPKSPRKHN). Over residues 55–64 (YRNESARESL) the composition is skewed to basic and acidic residues. The residue at position 67 (Ser67) is a Phosphoserine. Residue Lys80 forms a Glycyl lysine isopeptide (Lys-Gly) (interchain with G-Cter in SUMO2) linkage. Residues 92–121 (AKRTLSKKEQEELKKKEDEKAAAEIYEEFL) are a coiled coil. 2 stretches are compositionally biased toward basic and acidic residues: residues 97–111 (SKKE…EDEK) and 144–155 (AKEEHETDEKRG). Glycyl lysine isopeptide (Lys-Gly) (interchain with G-Cter in SUMO2) cross-links involve residues Lys145 and Lys168. The span at 169 to 178 (NPPNQSSNER) shows a compositional bias: polar residues. Positions 186–222 (ETKKPPLKKGEKEKKKSNLELFKEELKQIQEERDERH) are enriched in basic and acidic residues. Residues 192–232 (LKKGEKEKKKSNLELFKEELKQIQEERDERHKTKGRLSRFE) are a coiled coil. The residue at position 202 (Ser202) is a Phosphoserine. Residue Lys208 forms a Glycyl lysine isopeptide (Lys-Gly) (interchain with G-Cter in SUMO2) linkage. Residue Ser236 is modified to Phosphoserine. Residues 239-249 (DGQRRSMDAPS) show a composition bias toward basic and acidic residues. An RRM domain is found at 274-355 (TNLYLGNINP…FEMKLGWGKA (82 aa)). Residues 430–473 (LIHRMIEFVVREGPMFEAMIMNREINNPMFRFLFENQTPAHVYY) form an SURP motif repeat. Ser485 bears the Phosphoserine mark. The CID domain occupies 534 to 679 (LKEEQRDKLE…KLQNIFLGLV (146 aa)). Phosphothreonine is present on Thr719. Glycyl lysine isopeptide (Lys-Gly) (interchain with G-Cter in SUMO2) cross-links involve residues Lys748 and Lys749. Lys760 is modified (N6-acetyllysine; alternate). Lys760 participates in a covalent cross-link: Glycyl lysine isopeptide (Lys-Gly) (interchain with G-Cter in SUMO2); alternate. Disordered regions lie at residues 778-841 (KWEL…EEKR) and 855-1029 (QDEL…KNKH). The span at 786–806 (EESEEEENQNQEEESEDEEDT) shows a compositional bias: acidic residues. 3 positions are modified to phosphoserine: Ser788, Ser800, and Ser811. 2 stretches are compositionally biased toward basic and acidic residues: residues 810-841 (KSEE…EEKR) and 874-922 (QVEH…TPTR). Glycyl lysine isopeptide (Lys-Gly) (interchain with G-Cter in SUMO2) cross-links involve residues Lys822, Lys829, and Lys832. Positions 837-915 (SEEKRAKLRE…ESRSKDKKEK (79 aa)) form a coiled coil. Position 931 is a phosphothreonine (Thr931). A phosphoserine mark is found at Ser946 and Ser948. Basic and acidic residues predominate over residues 950 to 980 (KSERSERSERSHKESSRSRSSHKDSPRDVSK). Basic residues predominate over residues 991–1029 (TPKRSRRSRSRSPKKSGKKSRSQSRSPHRSHKKSKKNKH).

This sequence belongs to the splicing factor SR family. As to quaternary structure, interacts with ERBB4.

The protein resides in the nucleus. The polypeptide is U2 snRNP-associated SURP motif-containing protein (U2SURP) (Homo sapiens (Human)).